Reading from the N-terminus, the 361-residue chain is Outer membrane protein P2 (361 aa).

The first 20 residues, 1-20, serve as a signal peptide directing secretion; it reads MKKTLAALIVGAFAASAANA.

It belongs to the Gram-negative porin family. As to quaternary structure, homotrimer.

Its subcellular location is the cell outer membrane. Forms pores that allow passive diffusion of small molecules across the outer membrane. This Haemophilus influenzae protein is Outer membrane protein P2 (ompP2).